The following is a 342-amino-acid chain: MNHSLKPWNTFGIDHNAQHIVCAEDEQQLLNAWQHATAEGQPVLILGEGSNVLFLEDYRGTVIINRIKGIEIHDEPDAWYLHVGAGENWHRLVKYTLQEGMPGLENLALIPGCVGSSPIQNIGAYGVELQRVCAYVDCVELATGKQVRLTAKECRFGYRDSIFKHEYQDRFAIVAVGLRLPKEWQPVLTYGDLTRLEPTTVTPQQVFNAVCHMRTTKLPDPKVNGNAGSFFKNPVVSAETAKALLSQFPTAPNYPQADGSVKLAAGWLIDQCQLKGMQMGGAAVHRQQALVLINEDNAKSEDVVQLAHHVRQKVGEKFNVWLEPEVRFIGASGEVSAVETIS.

The region spanning 13–183 (IDHNAQHIVC…VAVGLRLPKE (171 aa)) is the FAD-binding PCMH-type domain. Residue Arg159 is part of the active site. Ser229 acts as the Proton donor in catalysis. The active site involves Glu325.

This sequence belongs to the MurB family. The cofactor is FAD.

It localises to the cytoplasm. It catalyses the reaction UDP-N-acetyl-alpha-D-muramate + NADP(+) = UDP-N-acetyl-3-O-(1-carboxyvinyl)-alpha-D-glucosamine + NADPH + H(+). It participates in cell wall biogenesis; peptidoglycan biosynthesis. In terms of biological role, cell wall formation. The sequence is that of UDP-N-acetylenolpyruvoylglucosamine reductase from Shigella dysenteriae serotype 1 (strain Sd197).